The following is a 536-amino-acid chain: Protoporphyrinogen oxidase, chloroplastic (536 aa).

The transit peptide at 1–36 (MAAAAAAMATATSATAAPPLRIRDAARRTRRRGHVR) directs the protein to the chloroplast. Residues 62–67 (GGGISG), 87–88 (EA), and 111–114 (GPNS) each bind FAD. Residues 248–272 (TIKTIQERGKNPKPPRDPRLPTPKG) form a disordered region. The segment covering 252–266 (IQERGKNPKPPRDPR) has biased composition (basic and acidic residues). 510–512 (VAL) is an FAD binding site.

This sequence belongs to the protoporphyrinogen/coproporphyrinogen oxidase family. Protoporphyrinogen oxidase subfamily. FAD is required as a cofactor.

Its subcellular location is the plastid. It localises to the chloroplast. The catalysed reaction is protoporphyrinogen IX + 3 O2 = protoporphyrin IX + 3 H2O2. The protein operates within porphyrin-containing compound metabolism; protoporphyrin-IX biosynthesis; protoporphyrin-IX from protoporphyrinogen-IX: step 1/1. It participates in porphyrin-containing compound metabolism; chlorophyll biosynthesis. Functionally, catalyzes the 6-electron oxidation of protoporphyrinogen-IX to form protoporphyrin-IX. This chain is Protoporphyrinogen oxidase, chloroplastic (PPOX1), found in Oryza sativa subsp. japonica (Rice).